The chain runs to 367 residues: ELAV-like protein 3 (367 aa).

RRM domains are found at residues 39–117 (TNLI…YARP), 125–205 (ANLY…FANN), and 284–362 (WCIF…FKTS).

The protein belongs to the RRM elav family. As to quaternary structure, interacts with MAP1B light chain LC1. Brain specific.

Its function is as follows. RNA-binding protein that binds to AU-rich element (ARE) sequences of target mRNAs, including VEGF mRNA. May also bind poly-A tracts via RRM 3. May be involved in neuronal differentiation and maintenance. Plays a role in the stabilization of GAP43 mRNA and in spatial learning. This Homo sapiens (Human) protein is ELAV-like protein 3 (ELAVL3).